Consider the following 506-residue polypeptide: BTB/POZ domain and ankyrin repeat-containing protein NPR5 (506 aa).

The 109-residue stretch at 23–131 (SDVTFSVEGR…LYSGQVSLVP (109 aa)) folds into the BTB domain. The segment at 137–151 (RPGCGERGCWHTHCA) adopts a C2HC NPR-type zinc-finger fold. Residues Cys140, Cys145, His147, and Cys150 each contribute to the Zn(2+) site. ANK repeat units follow at residues 278 to 306 (HKIR…GLNL), 307 to 337 (DDAL…DVNH), 342 to 371 (AGKT…DPNV), and 375 to 409 (DGVT…KLRL). Residues 481–506 (KMNDGGDGDDGGSRGPSSLFSPHGFP) are disordered.

The protein belongs to the plant 'ANKYRIN-BTB/POZ' family. 'NOOT-BOP-COCH-like' (NBCL) subfamily. As to quaternary structure, homodimer. Interacts with TGAL5, TGAL7, TGAL8 and TGAL11.

The protein localises to the nucleus. The protein resides in the cytoplasm. It participates in protein modification; protein ubiquitination. May act as a substrate-specific adapter of an E3 ubiquitin-protein ligase complex (CUL3-RBX1-BTB) which mediates the ubiquitination and subsequent proteasomal degradation of target proteins. Transcriptional co-regulator involved in the promotion of leaf and floral meristem fate and determinacy. Required for the abscission of senescent organs, probably by regulating the cell wall disorganization in abscission zones (AZs, e.g. pulvini at the base of leaves). Maybe involved in defense response against pathogens. This Oryza sativa subsp. japonica (Rice) protein is BTB/POZ domain and ankyrin repeat-containing protein NPR5.